The primary structure comprises 69 residues: NAD(P)H-quinone oxidoreductase subunit O (69 aa).

Belongs to the complex I NdhO subunit family. In terms of assembly, NDH-1 can be composed of about 15 different subunits; different subcomplexes with different compositions have been identified which probably have different functions.

The protein localises to the cellular thylakoid membrane. It carries out the reaction a plastoquinone + NADH + (n+1) H(+)(in) = a plastoquinol + NAD(+) + n H(+)(out). The enzyme catalyses a plastoquinone + NADPH + (n+1) H(+)(in) = a plastoquinol + NADP(+) + n H(+)(out). Functionally, NDH-1 shuttles electrons from an unknown electron donor, via FMN and iron-sulfur (Fe-S) centers, to quinones in the respiratory and/or the photosynthetic chain. The immediate electron acceptor for the enzyme in this species is believed to be plastoquinone. Couples the redox reaction to proton translocation, and thus conserves the redox energy in a proton gradient. Cyanobacterial NDH-1 also plays a role in inorganic carbon-concentration. This chain is NAD(P)H-quinone oxidoreductase subunit O, found in Acaryochloris marina (strain MBIC 11017).